The primary structure comprises 471 residues: Protein hedgehog (471 aa).

Residue Cys-85 is the site of N-palmitoyl cysteine attachment. Glu-149, Glu-150, Asp-155, Thr-185, Glu-186, Asp-189, and Asp-191 together coordinate Ca(2+). The Cholesterol glycine ester moiety is linked to residue Gly-257.

It belongs to the hedgehog family. As to quaternary structure, interacts with shf. Interacts with ptc and CG5504/l(2)tid. Post-translationally, the C-terminal part of the hedgehog protein precursor displays an autoproteolysis activity that results in the cleavage of the full-length protein into two parts (N-product and C-product). In addition, the C-terminal part displays a cholesterol transferase activity that results by the covalent attachment of a cholesterol moiety to the C-terminal of the newly generated N-product. The N-product is the active species in both local and long-range signaling, whereas the C-product has no signaling activity. In terms of processing, cholesterylation is required for N-product targeting to lipid rafts and multimerization. N-palmitoylation by Rasp of the hedgehog N-product, within the secretory pathway, is required for the embryonic and larval patterning activities of the hedgehog signal. As to expression, in embryos, expression starts at stage 5 as a few stripes at the anterior and posterior ends, this expands to 17 stripes during stages 8-11. Expression is also seen in CNS and some PNS cells until stage 13-14, and in foregut, hindgut and salivary glands. In larvae, expression is seen in the posterior compartment of the wing, leg and antennal imaginal disks. In adults, high level of expression in specific regions of the proventriculus and hindgut, with slightly lower levels of expression in the posterior midgut. Relatively low levels of expression in the anterior midgut region.

It localises to the nucleus. The protein localises to the cytoplasm. It is found in the cell membrane. It catalyses the reaction glycyl-L-cysteinyl-[protein] + cholesterol + H(+) = [protein]-C-terminal glycyl cholesterol ester + N-terminal L-cysteinyl-[protein]. The C-terminal part of the hedgehog protein precursor displays an autoproteolysis activity that results in the cleavage of the full-length protein into two parts (N-product and C-product). In addition, the C-terminal part displays a cholesterol transferase activity that results by the covalent attachment of a cholesterol moiety to the C-terminal of the newly generated N-product. Once cleaved, the C-product has no signaling activity and diffuses from the cell. In terms of biological role, the dually lipidated hedgehog protein N-product is a morphogen which is essential for a variety of patterning events during development. Establishes the anterior-posterior axis of the embryonic segments and patterns the larval imaginal disks. Binds to the patched (ptc) receptor, which functions in association with smoothened (smo), to activate the transcription of target genes wingless (wg), decapentaplegic (dpp) and ptc. In the absence of hh, ptc represses the constitutive signaling activity of smo through fused (fu). Essential component of a signaling pathway which regulates the Duox-dependent gut immune response to bacterial uracil; required to activate Cad99C-dependent endosome formation, norpA-dependent Ca2+ mobilization and p38 MAPK, which are essential steps in the Duox-dependent production of reactive oxygen species (ROS) in response to intestinal bacterial infection. During photoreceptor differentiation, it up-regulates transcription of Ubr3, which in turn promotes the hh-signaling pathway by mediating the ubiquitination and degradation of cos. This chain is Protein hedgehog, found in Drosophila melanogaster (Fruit fly).